Here is a 301-residue protein sequence, read N- to C-terminus: Mitochondrial import receptor subunit TOM40 homolog (301 aa).

Over residues 1–19 the composition is skewed to polar residues; the sequence is MATPTESELASPIPQTNPG. Residues 1–20 are disordered; that stretch reads MATPTESELASPIPQTNPGS.

It belongs to the Tom40 family. As to quaternary structure, forms part of the preprotein translocase complex of the outer mitochondrial membrane (TOM complex). Interacts with mitochondrial targeting sequences. In terms of tissue distribution, ubiquitously expressed, but highly expressed in the pharyngeal muscles, the nerve ring, the intestine, gonadal sheath and in the tail hypodermis.

Its subcellular location is the mitochondrion outer membrane. Functionally, channel-forming protein essential for import of protein precursors into mitochondria. Specifically required for nnt-1 accumulation in the mitochondria and may be involved in the secretion of daf-28/insulin from the mitochondria. Required for embryonic and larval development. This is Mitochondrial import receptor subunit TOM40 homolog from Caenorhabditis elegans.